The following is a 599-amino-acid chain: NADH-quinone oxidoreductase subunit C/D (599 aa).

Positions 1-189 (MTDLTTHDLA…DPFVLTKQKE (189 aa)) are NADH dehydrogenase I subunit C. Residues 213–599 (DFMFLNLGPN…IDFVMSDVDR (387 aa)) are NADH dehydrogenase I subunit D.

This sequence in the N-terminal section; belongs to the complex I 30 kDa subunit family. It in the C-terminal section; belongs to the complex I 49 kDa subunit family. In terms of assembly, NDH-1 is composed of 13 different subunits. Subunits NuoB, CD, E, F, and G constitute the peripheral sector of the complex.

Its subcellular location is the cell inner membrane. The enzyme catalyses a quinone + NADH + 5 H(+)(in) = a quinol + NAD(+) + 4 H(+)(out). Its function is as follows. NDH-1 shuttles electrons from NADH, via FMN and iron-sulfur (Fe-S) centers, to quinones in the respiratory chain. The immediate electron acceptor for the enzyme in this species is believed to be ubiquinone. Couples the redox reaction to proton translocation (for every two electrons transferred, four hydrogen ions are translocated across the cytoplasmic membrane), and thus conserves the redox energy in a proton gradient. This is NADH-quinone oxidoreductase subunit C/D from Pectobacterium carotovorum subsp. carotovorum (strain PC1).